The sequence spans 146 residues: Lysozyme-like protein 4 (146 aa).

A signal peptide spans methionine 1–alanine 19. The 127-residue stretch at tyrosine 20–leucine 146 folds into the C-type lysozyme domain. Cystine bridges form between cysteine 25-cysteine 144, cysteine 49-cysteine 131, cysteine 84-cysteine 96, and cysteine 92-cysteine 110. The active site involves glutamate 54.

This sequence belongs to the glycosyl hydrolase 22 family. As to quaternary structure, monomer. Expressed in testis and epididymis.

The protein resides in the secreted. The protein localises to the cytoplasmic vesicle. It localises to the secretory vesicle. It is found in the acrosome. Its subcellular location is the cell projection. The protein resides in the cilium. The protein localises to the flagellum. Functionally, may be involved in fertilization. Has no detectable bacteriolytic and lysozyme activities in vitro. This is Lysozyme-like protein 4 (LYZL4) from Homo sapiens (Human).